The following is a 167-amino-acid chain: Elafin (167 aa).

The N-terminal stretch at 1–21 is a signal peptide; the sequence is MRSRSFLVLVVVFLICGTLVA. Positions 22-70 are excised as a propeptide; it reads QAAGRIRRPKGKGTKKILALVKGQGPVRGKDQVKGQGPVKGQDLGKSQD. A run of 12 repeats spans residues 44-49, 50-55, 56-61, 62-67, 68-73, 74-79, 80-85, 86-91, 92-97, 98-103, 104-109, and 110-115. The 12 X 6 AA tandem repeats of [GSAL]-[QEK]-[DGLP]-[APSLQ]-[VGDFI]-[KR] stretch occupies residues 44–115; sequence GQGPVRGKDQ…DPVKAQPAIK (72 aa). Residues 46-104 form a disordered region; it reads GPVRGKDQVKGQGPVKGQDLGKSQDPVKAQLPDKGQDLGKGEDSVKGQDPFKAQLPDKL. The interval 78–126 is 2 X tandem repeats of SVP-1 like motif; that stretch reads DKGQDLGKGEDSVKGQDPFKAQLPDKLQDPVKAQPAIKRLILLTKPGSC. The segment covering 79–91 has biased composition (basic and acidic residues); sequence KGQDLGKGEDSVK. SVP-1 clotting repeat units lie at residues 80 to 101 and 104 to 126; these read GQDLGKGEDSVKGQDPFKAQLP and LQDPVKAQPAIKRLILLTKPGSC. Residues 119–167 form the WAP domain; that stretch reads LLTKPGSCPRILIRCLMVNPPNRCLSDAQCPGLKKCCEGFCGKACMDPK. Intrachain disulfides connect C126/C155, C133/C159, C142/C154, and C148/C163.

As to expression, trachea and large intestine.

Functionally, neutrophil and pancreatic elastase-specific inhibitor of skin. It may prevent elastase-mediated tissue proteolysis. This is Elafin from Sus scrofa (Pig).